Reading from the N-terminus, the 103-residue chain is MAVQQKIRIKLKSYDHSLVDKWALKIIDVVKQTDAIIFGPIPLPTKTHVYTVNRSPHVDKKSREQFAFSSHKRLIEIINPTARTIDMLMKLELPSGVDVEIKS.

Belongs to the universal ribosomal protein uS10 family. Part of the 30S ribosomal subunit.

Its function is as follows. Involved in the binding of tRNA to the ribosomes. The sequence is that of Small ribosomal subunit protein uS10 from Chlorobaculum parvum (strain DSM 263 / NCIMB 8327) (Chlorobium vibrioforme subsp. thiosulfatophilum).